A 358-amino-acid chain; its full sequence is MNTEKDRLLTFQMWPLTFLSPADLAKAGFYYIGPGDRVACFACGGKLSNWEPKDDAMTEHLRHFPNCPFLGNQLQDSSRYTVSNLSMQTYAARFKTFCNWPSSIPVHPEQLASAGFYYMGHSDDVKCFCCDGGLRCWESGDDPWVEHAKWFPRCEYLIRIKGQEFISRVQASYPHLLEQLLSTSDNPEDENAEPPNDLSLIRKNRMALFQHLTCVLPILDSLLIARVISEQEHDVIKQKTQTSLQARELIDIILVKGNYAATIFKNSLQEIDPMLYKHLFVQQDIKYIPTENVSDLSMEEQLRRLQEERTCKVCMDKEVSIVFIPCGHLVVCKDCAPSLRKCPICRGTIKGTVRTFLS.

BIR repeat units follow at residues 4–70 and 90–157; these read EKDR…CPFL and YAAR…CEYL. 4 residues coordinate Zn(2+): cysteine 127, cysteine 130, histidine 147, and cysteine 154. One can recognise a CARD domain in the interval 193–283; it reads EPPNDLSLIR…MLYKHLFVQQ (91 aa). The RING-type zinc finger occupies 311–346; that stretch reads CKVCMDKEVSIVFIPCGHLVVCKDCAPSLRKCPICR.

The protein belongs to the IAP family.

The protein is Putative inhibitor of apoptosis (PIAP) of Sus scrofa (Pig).